Reading from the N-terminus, the 67-residue chain is Conotoxin AbVIN (67 aa).

An N-terminal signal peptide occupies residues 1–17; sequence VIIIAVLFLTACQLIAT. The propeptide occupies 18–40; it reads ASYARSERKHPDLRLSSRNSKLS. 3 disulfides stabilise this stretch: C43–C57, C50–C61, and C56–C66.

Belongs to the conotoxin O1 superfamily. In terms of tissue distribution, expressed by the venom duct.

Its subcellular location is the secreted. In Conus abbreviatus (Abbreviated cone), this protein is Conotoxin AbVIN.